A 513-amino-acid chain; its full sequence is ATP synthase subunit alpha (513 aa).

An ATP-binding site is contributed by 169-176 (GDRQTGKT).

The protein belongs to the ATPase alpha/beta chains family. F-type ATPases have 2 components, CF(1) - the catalytic core - and CF(0) - the membrane proton channel. CF(1) has five subunits: alpha(3), beta(3), gamma(1), delta(1), epsilon(1). CF(0) has three main subunits: a(1), b(2) and c(9-12). The alpha and beta chains form an alternating ring which encloses part of the gamma chain. CF(1) is attached to CF(0) by a central stalk formed by the gamma and epsilon chains, while a peripheral stalk is formed by the delta and b chains.

The protein resides in the cell inner membrane. The enzyme catalyses ATP + H2O + 4 H(+)(in) = ADP + phosphate + 5 H(+)(out). Its function is as follows. Produces ATP from ADP in the presence of a proton gradient across the membrane. The alpha chain is a regulatory subunit. The chain is ATP synthase subunit alpha from Haemophilus influenzae (strain ATCC 51907 / DSM 11121 / KW20 / Rd).